A 494-amino-acid chain; its full sequence is Hydroxyneurosporene desaturase (494 aa).

The protein belongs to the carotenoid/retinoid oxidoreductase family.

It catalyses the reaction rhodopin + A = (3E)-3,4-didehydrorhodopin + AH2. It participates in carotenoid biosynthesis; spheroidene biosynthesis. Catalyzes the introduction of C-3,4 double bonds into 1-hydroxyneurosporene (1-HO-Neu) to yield demethylspheroidene (DMS). The polypeptide is Hydroxyneurosporene desaturase (crtD) (Rhodobacter capsulatus (strain ATCC BAA-309 / NBRC 16581 / SB1003)).